Here is a 1064-residue protein sequence, read N- to C-terminus: Serine protease inhibitor Kazal-type 5 (1064 aa).

The signal sequence occupies residues 1–22 (MKIATVSVLLPLALCLIQDAAS). One can recognise a Kazal-like 1; atypical domain in the interval 28–66 (EMCHEFQAFMKNGKLFCPQDKKFFQSLDGIMFINKCATC). 21 disulfide bridges follow: Cys-30/Cys-66, Cys-44/Cys-63, Cys-97/Cys-133, Cys-111/Cys-130, Cys-119/Cys-151, Cys-161/Cys-197, Cys-175/Cys-194, Cys-225/Cys-261, Cys-239/Cys-258, Cys-297/Cys-333, Cys-311/Cys-330, Cys-367/Cys-403, Cys-381/Cys-400, Cys-437/Cys-473, Cys-451/Cys-470, Cys-496/Cys-532, Cys-510/Cys-529, Cys-567/Cys-603, Cys-581/Cys-600, Cys-632/Cys-668, and Cys-646/Cys-665. Kazal-like domains are found at residues 91–153 (APTE…ECKS), 155–216 (NPEQ…ETRI), 219–285 (NAEK…KAEE), 291–352 (REIV…ARAR), 361–423 (TSYA…KSRN), 431–489 (ASFE…KAKR), 490–551 (EAAK…EEKG), 561–622 (EAVQ…PRAK), 626–688 (EAEK…EDQR), 701–757 (GNTQ…KNEY), 768–830 (ESGK…EDRS), 843–905 (NDKE…EKSS), 910–971 (NNAK…EKPS), and 987–1048 (SLDS…KCEE). Positions 676-688 (NEERKRKEEEDQR) are enriched in basic and acidic residues. The interval 676–705 (NEERKRKEEEDQRNAAGHGSSGGGGGNTQD) is disordered. Intrachain disulfides connect Cys-707/Cys-743, Cys-721/Cys-740, Cys-774/Cys-810, Cys-788/Cys-807, Cys-849/Cys-885, and Cys-863/Cys-882. Residues 751-775 (AERKNEYSRSRSNGTGSESGKDTCD) form a disordered region. Residues 818 to 849 (AAEKKKKEDEDRSNTGERSNTGERSNDKEDLC) are disordered. Basic and acidic residues predominate over residues 895-905 (ERKKKDEEKSS). The segment at 895–915 (ERKKKDEEKSSSKPSNNAKDE) is disordered. 2 cysteine pairs are disulfide-bonded: Cys-916–Cys-952 and Cys-930–Cys-949. A compositionally biased stretch (basic and acidic residues) spans 967–977 (QEKPSHVRASQ). The disordered stretch occupies residues 967–987 (QEKPSHVRASQEEDSPDSFSS). 3 cysteine pairs are disulfide-bonded: Cys-993–Cys-1028, Cys-1006–Cys-1025, and Cys-1014–Cys-1046. The interval 1041-1064 (RSTGKCEESSTPGTTAASMPPSDE) is disordered.

Proteolytically processed by furin in individual domains (D1, D5, D6, D8 through D11, and D9 through D15) exhibiting various inhibitory potentials for multiple proteases. As to expression, highly expressed in the thymus and stratum corneum. Also found in the oral mucosa, parathyroid gland, Bartholin's glands, tonsils, and vaginal epithelium. Very low levels are detected in lung, kidney, and prostate.

The protein localises to the secreted. In terms of biological role, serine protease inhibitor, probably important for the anti-inflammatory and/or antimicrobial protection of mucous epithelia. Contribute to the integrity and protective barrier function of the skin by regulating the activity of defense-activating and desquamation-involved proteases. Inhibits KLK5, it's major target, in a pH-dependent manner. Inhibits KLK7, KLK14 CASP14, and trypsin. The chain is Serine protease inhibitor Kazal-type 5 (SPINK5) from Homo sapiens (Human).